Here is a 207-residue protein sequence, read N- to C-terminus: Large ribosomal subunit protein uL4 (207 aa).

The tract at residues 45-78 (RQGTHKTKNRAEVSGGGRKPWRQKGTGRARQGSI) is disordered.

The protein belongs to the universal ribosomal protein uL4 family. As to quaternary structure, part of the 50S ribosomal subunit.

In terms of biological role, one of the primary rRNA binding proteins, this protein initially binds near the 5'-end of the 23S rRNA. It is important during the early stages of 50S assembly. It makes multiple contacts with different domains of the 23S rRNA in the assembled 50S subunit and ribosome. Its function is as follows. Forms part of the polypeptide exit tunnel. This is Large ribosomal subunit protein uL4 from Geobacillus sp. (strain WCH70).